The primary structure comprises 477 residues: Mitochondrial adenyl nucleotide antiporter SLC25A24 (477 aa).

Positions 1 to 174 (MHQLIRKFVF…RYWKKSTVLD (174 aa)) are regulatory N-terminal domain. Topologically, residues 1 to 198 (MHQLIRKFVF…EKTTGMWWKQ (198 aa)) are mitochondrial intermembrane. The region spanning 20 to 55 (DNTKSFAELFEKLDVNKDGKVDVSELKTGLAAMGFS) is the EF-hand 1 domain. Residues aspartate 33, asparagine 35, aspartate 37, lysine 39, glutamate 44, aspartate 69, aspartate 71, aspartate 73, glutamate 80, aspartate 100, asparagine 102, aspartate 104, arginine 106, glutamate 111, aspartate 136, aspartate 138, threonine 140, threonine 142, and glutamate 147 each coordinate Ca(2+). 2 EF-hand domains span residues 87–122 (EHEK…LGIN) and 123–158 (LSDK…NPAE). Residues 160–169 (LQQIIRYWKK) are linker region. The tract at residues 175 to 477 (IGDSLTIPDE…YMRSGLGISK (303 aa)) is C-terminal transmembrane transporter domain. Solcar repeat units lie at residues 193-279 (GMWW…YKKL), 287-372 (VQSH…LKNT), and 384-472 (PGVL…MRSG). Residues 199 to 216 (LAAGGVAGAVSRTGTAPL) traverse the membrane as a helical segment. Over 217–253 (DRMKVFMQVHSSKTNKISLVNGFKQMIKEGGVASLWR) the chain is Mitochondrial matrix. A helical membrane pass occupies residues 254-273 (GNGVNVIKIAPETAIKFMAY). The Mitochondrial intermembrane segment spans residues 274-296 (EQYKKLLSKDGGKVQSHERFMAG). A helical membrane pass occupies residues 297 to 310 (SLAGATAQTAIYPM). Over 311-346 (EVMKTRLTLRKTGQYSGMFDCAKKILRKEGVKAFYK) the chain is Mitochondrial matrix. The helical transmembrane segment at 347 to 366 (GYVPNILGIIPYAGIDLAVY) threads the bilayer. Topologically, residues 367-389 (ETLKNTWLSHYAKDTANPGVLVL) are mitochondrial intermembrane. Residues 390 to 407 (LGCGTISSTCGQLASYPL) traverse the membrane as a helical segment. At 408-446 (ALIRTRMQAMASMEGSEQVSMSKLVKKIMQKEGFFGLYR) the chain is on the mitochondrial matrix side. A helical transmembrane segment spans residues 447–466 (GILPNFMKVIPAVSISYVVY). The Mitochondrial intermembrane segment spans residues 467-477 (EYMRSGLGISK).

Belongs to the mitochondrial carrier (TC 2.A.29) family. In terms of assembly, monomer.

It is found in the mitochondrion inner membrane. It catalyses the reaction Mg(2+)(out) + phosphate(in) + ATP(out) = Mg(2+)(in) + phosphate(out) + ATP(in). It carries out the reaction ADP(out) + phosphate(in) + H(+)(out) = ADP(in) + phosphate(out) + H(+)(in). The enzyme catalyses AMP(out) + phosphate(in) = AMP(in) + phosphate(out). The catalysed reaction is phosphate(in) + ATP(out) + 2 H(+)(out) = phosphate(out) + ATP(in) + 2 H(+)(in). It catalyses the reaction dADP(in) + ADP(out) = dADP(out) + ADP(in). It carries out the reaction Mg(2+)(in) + ADP(out) + ATP(in) + H(+)(out) = Mg(2+)(out) + ADP(in) + ATP(out) + H(+)(in). The enzyme catalyses ADP(out) + diphosphate(in) = ADP(in) + diphosphate(out). The catalysed reaction is dAMP(in) + ADP(out) + H(+)(out) = dAMP(out) + ADP(in) + H(+)(in). It catalyses the reaction 3'-AMP(in) + ADP(out) + H(+)(out) = 3'-AMP(out) + ADP(in) + H(+)(in). It carries out the reaction dAMP(out) + phosphate(in) = dAMP(in) + phosphate(out). The enzyme catalyses 3'-AMP(out) + phosphate(in) = 3'-AMP(in) + phosphate(out). The catalysed reaction is dADP(out) + phosphate(in) + H(+)(out) = dADP(in) + phosphate(out) + H(+)(in). Its activity is regulated as follows. Activated by an increase in cytosolic calcium levels that induce a conformational change of the N-terminal regulatory domain, uncapping the channel and allowing transport. Inhibited by bathophenanthroline, mersalyl, p-hydroxymercuribenzoate, bromcresol purple and tannic acid. Functionally, electroneutral antiporter that mediates the transport of adenyl nucleotides through the inner mitochondrial membrane. Originally identified as an ATP-magnesium/inorganic phosphate antiporter, it also acts as a broad specificity adenyl nucleotide antiporter. By regulating the mitochondrial matrix adenyl nucleotide pool could adapt to changing cellular energetic demands and indirectly regulate adenyl nucleotide-dependent metabolic pathways. The polypeptide is Mitochondrial adenyl nucleotide antiporter SLC25A24 (slc25a24) (Danio rerio (Zebrafish)).